A 262-amino-acid chain; its full sequence is MIHETAKIHPAAVVEEGAKIGANVTVGPFTYITSTVEIGEGTEVMSHVVIKGHTKIGKDNRIFPHAVIGEENQDKKYGGEDTTVVIGDRNVIREAVQVHRGTVQDKATTVIGDDNLLCVNAHIAHDVVVGNHTHIGNNAILGGHVTVEDHAGVMALSAIHPFCTVGAYAYVGGCSAVVQDVPAYVLAQGNHATPFGLNLVGLKRNGFEKPEIRALQKAYKEIYRSGKTLEEVKPILAEMAQEWPAVKRFSDILETTERGIIR.

The protein belongs to the transferase hexapeptide repeat family. LpxA subfamily. In terms of assembly, homotrimer.

The protein resides in the cytoplasm. It carries out the reaction a (3R)-hydroxyacyl-[ACP] + UDP-N-acetyl-alpha-D-glucosamine = a UDP-3-O-[(3R)-3-hydroxyacyl]-N-acetyl-alpha-D-glucosamine + holo-[ACP]. It functions in the pathway glycolipid biosynthesis; lipid IV(A) biosynthesis; lipid IV(A) from (3R)-3-hydroxytetradecanoyl-[acyl-carrier-protein] and UDP-N-acetyl-alpha-D-glucosamine: step 1/6. Involved in the biosynthesis of lipid A, a phosphorylated glycolipid that anchors the lipopolysaccharide to the outer membrane of the cell. This Vibrio parahaemolyticus serotype O3:K6 (strain RIMD 2210633) protein is Acyl-[acyl-carrier-protein]--UDP-N-acetylglucosamine O-acyltransferase.